Consider the following 263-residue polypeptide: MFRNQYDNDVTVWSPQGRIHQIEYAMEAVKQGSATVGLKSKTHAVLVALKRAQSELAAHQKKILHVDNHIGISIAGLTADARLLCNFMRQECLDSRFVFDRPLPVSRLVSLIGSKTQIPTQRYGRRPYGVGLLIAGYDDMGPHVFQTCPSANYFDCRAMSIGARSQSARTYLERHMSEFMQCNLDELVKHGLRALRETLPAEQDLTTKNVSIGIVGKDLEFTIYDDDDVSPFLDGLEERPQRKAQPSQAADEPAEKADEPMEH.

Met1 is modified (N-acetylmethionine). The residue at position 110 (Ser110) is a Phosphoserine; alternate. A glycan (O-linked (GlcNAc) serine; alternate) is linked at Ser110. A Glycyl lysine isopeptide (Lys-Gly) (interchain with G-Cter in ubiquitin) cross-link involves residue Lys115. Ser177 is subject to Phosphoserine. Lys208 is covalently cross-linked (Glycyl lysine isopeptide (Lys-Gly) (interchain with G-Cter in ubiquitin)). The interval Phe232 to His263 is disordered. Positions Pro253 to His263 are enriched in basic and acidic residues.

It belongs to the peptidase T1A family. The 26S proteasome consists of a 20S proteasome core and two 19S regulatory subunits. The 20S proteasome core is a barrel-shaped complex made of 28 subunits that are arranged in four stacked rings. The two outer rings are each formed by seven alpha subunits, and the two inner rings are formed by seven beta subunits. The proteolytic activity is exerted by three beta-subunits PSMB5, PSMB6 and PSMB7. Interacts with NOTCH3. Interacts with ZFAND1. Post-translationally, proteolytically cleaved from a C-terminal extension in the course of the conversion of the proteasome from its latent form into its active form. In terms of tissue distribution, ubiquitous.

Its subcellular location is the cytoplasm. It localises to the nucleus. Its function is as follows. Component of the 20S core proteasome complex involved in the proteolytic degradation of most intracellular proteins. This complex plays numerous essential roles within the cell by associating with different regulatory particles. Associated with two 19S regulatory particles, forms the 26S proteasome and thus participates in the ATP-dependent degradation of ubiquitinated proteins. The 26S proteasome plays a key role in the maintenance of protein homeostasis by removing misfolded or damaged proteins that could impair cellular functions, and by removing proteins whose functions are no longer required. Associated with the PA200 or PA28, the 20S proteasome mediates ubiquitin-independent protein degradation. This type of proteolysis is required in several pathways including spermatogenesis (20S-PA200 complex) or generation of a subset of MHC class I-presented antigenic peptides (20S-PA28 complex). This chain is Proteasome subunit alpha type-1 (Psma1), found in Rattus norvegicus (Rat).